The primary structure comprises 388 residues: Succinate--CoA ligase [ADP-forming] subunit beta (388 aa).

The ATP-grasp domain maps to 9 to 244 (KEILRKFGVA…LDEEDPAEIE (236 aa)). ATP is bound by residues K46, 53–55 (GRG), E99, A102, and E107. Mg(2+) contacts are provided by N199 and D213. Residues N264 and 321 to 323 (GIM) each bind substrate.

It belongs to the succinate/malate CoA ligase beta subunit family. Heterotetramer of two alpha and two beta subunits. The cofactor is Mg(2+).

The catalysed reaction is succinate + ATP + CoA = succinyl-CoA + ADP + phosphate. The enzyme catalyses GTP + succinate + CoA = succinyl-CoA + GDP + phosphate. It functions in the pathway carbohydrate metabolism; tricarboxylic acid cycle; succinate from succinyl-CoA (ligase route): step 1/1. Succinyl-CoA synthetase functions in the citric acid cycle (TCA), coupling the hydrolysis of succinyl-CoA to the synthesis of either ATP or GTP and thus represents the only step of substrate-level phosphorylation in the TCA. The beta subunit provides nucleotide specificity of the enzyme and binds the substrate succinate, while the binding sites for coenzyme A and phosphate are found in the alpha subunit. The chain is Succinate--CoA ligase [ADP-forming] subunit beta from Burkholderia cenocepacia (strain HI2424).